A 99-amino-acid chain; its full sequence is Defensin-like protein 2 (99 aa).

The N-terminal stretch at 1-30 (MAMAKKSVSSFTLIFILVLVIFEVPEIKAQ) is a signal peptide. Intrachain disulfides connect Cys-34-Cys-86, Cys-47-Cys-71, Cys-56-Cys-81, and Cys-60-Cys-83. Residues 94–99 (ILRGGI) constitute a propeptide that is removed on maturation.

Belongs to the DEFL family. Protease inhibitor I18 (RTI/MTI-2) subfamily.

The protein localises to the secreted. Its function is as follows. Inhibits bovine beta-trypsin and alpha-chymotrypsin on a 1:1 molar basis. In Sinapis alba (White mustard), this protein is Defensin-like protein 2.